A 562-amino-acid polypeptide reads, in one-letter code: Methionine--tRNA ligase, mitochondrial (562 aa).

The N-terminal 10 residues, 1-10, are a transit peptide targeting the mitochondrion; it reads MLRSLALRTF. The short motif at 43 to 53 is the 'HIGH' region element; it reads FYVNAAPHLGH. Residues 332–336 carry the 'KMSKS' region motif; that stretch reads KMSKS. K335 contributes to the ATP binding site.

It belongs to the class-I aminoacyl-tRNA synthetase family.

It localises to the mitochondrion matrix. It catalyses the reaction tRNA(Met) + L-methionine + ATP = L-methionyl-tRNA(Met) + AMP + diphosphate. This Xenopus laevis (African clawed frog) protein is Methionine--tRNA ligase, mitochondrial (mars2).